The following is a 217-amino-acid chain: Serine acetyltransferase (217 aa).

The protein belongs to the transferase hexapeptide repeat family.

It is found in the cytoplasm. The enzyme catalyses L-serine + acetyl-CoA = O-acetyl-L-serine + CoA. It participates in amino-acid biosynthesis; L-cysteine biosynthesis; L-cysteine from L-serine: step 1/2. With respect to regulation, inhibited by cysteine. Its function is as follows. Catalyzes the acetylation of serine by acetyl-CoA to produce O-acetylserine (OAS). In Bacillus pumilus (strain SAFR-032), this protein is Serine acetyltransferase.